Consider the following 205-residue polypeptide: Methylthioribulose-1-phosphate dehydratase (205 aa).

Zn(2+) contacts are provided by H98 and H100.

The protein belongs to the aldolase class II family. MtnB subfamily. It depends on Zn(2+) as a cofactor.

It catalyses the reaction 5-(methylsulfanyl)-D-ribulose 1-phosphate = 5-methylsulfanyl-2,3-dioxopentyl phosphate + H2O. It participates in amino-acid biosynthesis; L-methionine biosynthesis via salvage pathway; L-methionine from S-methyl-5-thio-alpha-D-ribose 1-phosphate: step 2/6. In terms of biological role, catalyzes the dehydration of methylthioribulose-1-phosphate (MTRu-1-P) into 2,3-diketo-5-methylthiopentyl-1-phosphate (DK-MTP-1-P). The sequence is that of Methylthioribulose-1-phosphate dehydratase from Gluconacetobacter diazotrophicus (strain ATCC 49037 / DSM 5601 / CCUG 37298 / CIP 103539 / LMG 7603 / PAl5).